The primary structure comprises 520 residues: Nonsense-mediated mRNA decay factor SMG9 (520 aa).

Disordered regions lie at residues Met1–Leu94, Lys108–Thr143, and Lys341–Gly360. Ser2 bears the N-acetylserine mark. 5 positions are modified to phosphoserine: Ser2, Ser4, Ser7, Ser32, and Ser53. Over residues Gly36 to Ser53 the composition is skewed to basic and acidic residues. 2 stretches are compositionally biased toward pro residues: residues Gln78–Leu94 and Thr122–Pro133. The span at Pro342–Ser357 shows a compositional bias: low complexity. Position 451 is a phosphoserine (Ser451).

It belongs to the SMG9 family. Self-associates to form homodimers and forms heterodimers with SMG8; these assembly forms may represent SMG1C intermediate forms. Component of the SMG1C complex composed of SMG1, SMG8 and SMG9. Interacts with DHX34; the interaction is RNA-independent. Phosphorylated by SMG1.

Functionally, involved in nonsense-mediated decay (NMD) of mRNAs containing premature stop codons. Is recruited by release factors to stalled ribosomes together with SMG1 and SMG8 (forming the SMG1C protein kinase complex) and, in the SMG1C complex, is required for the efficient association between SMG1 and SMG8. Plays a role in brain, heart, and eye development. The polypeptide is Nonsense-mediated mRNA decay factor SMG9 (Homo sapiens (Human)).